We begin with the raw amino-acid sequence, 40 residues long: Photosystem II reaction center protein J (40 aa).

Residues Ile-8 to Phe-28 traverse the membrane as a helical segment.

This sequence belongs to the PsbJ family. In terms of assembly, PSII is composed of 1 copy each of membrane proteins PsbA, PsbB, PsbC, PsbD, PsbE, PsbF, PsbH, PsbI, PsbJ, PsbK, PsbL, PsbM, PsbT, PsbX, PsbY, PsbZ, Psb30/Ycf12, at least 3 peripheral proteins of the oxygen-evolving complex and a large number of cofactors. It forms dimeric complexes.

The protein resides in the plastid. Its subcellular location is the chloroplast thylakoid membrane. One of the components of the core complex of photosystem II (PSII). PSII is a light-driven water:plastoquinone oxidoreductase that uses light energy to abstract electrons from H(2)O, generating O(2) and a proton gradient subsequently used for ATP formation. It consists of a core antenna complex that captures photons, and an electron transfer chain that converts photonic excitation into a charge separation. In Jasminum nudiflorum (Winter jasmine), this protein is Photosystem II reaction center protein J.